A 113-amino-acid polypeptide reads, in one-letter code: Protein NATD1 (113 aa).

The segment covering 1–16 (MAQSPAAASPGAPEQG) has biased composition (low complexity). The tract at residues 1–20 (MAQSPAAASPGAPEQGCPIR) is disordered. An N-acetyltransferase domain is found at 22-112 (EHDRRRRQFT…PLPQYLERLQ (91 aa)).

This sequence belongs to the NATD1 family.

The polypeptide is Protein NATD1 (NATD1) (Bos taurus (Bovine)).